A 543-amino-acid chain; its full sequence is Chaperonin GroEL (543 aa).

ATP contacts are provided by residues 30–33 (TLGP), Lys-51, 87–91 (DGTTT), Gly-415, and Asp-496.

This sequence belongs to the chaperonin (HSP60) family. In terms of assembly, forms a cylinder of 14 subunits composed of two heptameric rings stacked back-to-back. Interacts with the co-chaperonin GroES.

It is found in the cytoplasm. The catalysed reaction is ATP + H2O + a folded polypeptide = ADP + phosphate + an unfolded polypeptide.. Its function is as follows. Together with its co-chaperonin GroES, plays an essential role in assisting protein folding. The GroEL-GroES system forms a nano-cage that allows encapsulation of the non-native substrate proteins and provides a physical environment optimized to promote and accelerate protein folding. This is Chaperonin GroEL from Gluconobacter oxydans (strain 621H) (Gluconobacter suboxydans).